Consider the following 37-residue polypeptide: Large ribosomal subunit protein bL36 (37 aa).

The protein belongs to the bacterial ribosomal protein bL36 family.

The sequence is that of Large ribosomal subunit protein bL36 from Gloeobacter violaceus (strain ATCC 29082 / PCC 7421).